The primary structure comprises 309 residues: Beta-ketoacyl-[acyl-carrier-protein] synthase III (309 aa).

Active-site residues include C111 and H236. An ACP-binding region spans residues 237-241 (QANVR). N266 is an active-site residue.

It belongs to the thiolase-like superfamily. FabH family. As to quaternary structure, homodimer.

It is found in the cytoplasm. It carries out the reaction malonyl-[ACP] + acetyl-CoA + H(+) = 3-oxobutanoyl-[ACP] + CO2 + CoA. The protein operates within lipid metabolism; fatty acid biosynthesis. Catalyzes the condensation reaction of fatty acid synthesis by the addition to an acyl acceptor of two carbons from malonyl-ACP. Catalyzes the first condensation reaction which initiates fatty acid synthesis and may therefore play a role in governing the total rate of fatty acid production. Possesses both acetoacetyl-ACP synthase and acetyl transacylase activities. Its substrate specificity determines the biosynthesis of branched-chain and/or straight-chain of fatty acids. The sequence is that of Beta-ketoacyl-[acyl-carrier-protein] synthase III from Aquifex aeolicus (strain VF5).